Here is a 65-residue protein sequence, read N- to C-terminus: Protein C13 (65 aa).

The protein belongs to the poxviridae C13 protein family.

The protein is Protein C13 of Vaccinia virus (strain Copenhagen) (VACV).